The chain runs to 491 residues: UDP-N-acetylmuramoyl-L-alanyl-D-glutamate--2,6-diaminopimelate ligase (491 aa).

S30 is a UDP-N-acetyl-alpha-D-muramoyl-L-alanyl-D-glutamate binding site. 108-114 (GTNGKTT) provides a ligand contact to ATP. Residues N149, 150 to 151 (TT), S177, Q183, and R185 each bind UDP-N-acetyl-alpha-D-muramoyl-L-alanyl-D-glutamate. K217 is modified (N6-carboxylysine). Meso-2,6-diaminopimelate-binding positions include R383, 407 to 410 (DNPR), G458, and E462. Positions 407–410 (DNPR) match the Meso-diaminopimelate recognition motif motif.

Belongs to the MurCDEF family. MurE subfamily. Mg(2+) serves as cofactor. Post-translationally, carboxylation is probably crucial for Mg(2+) binding and, consequently, for the gamma-phosphate positioning of ATP.

The protein localises to the cytoplasm. The catalysed reaction is UDP-N-acetyl-alpha-D-muramoyl-L-alanyl-D-glutamate + meso-2,6-diaminopimelate + ATP = UDP-N-acetyl-alpha-D-muramoyl-L-alanyl-gamma-D-glutamyl-meso-2,6-diaminopimelate + ADP + phosphate + H(+). The protein operates within cell wall biogenesis; peptidoglycan biosynthesis. In terms of biological role, catalyzes the addition of meso-diaminopimelic acid to the nucleotide precursor UDP-N-acetylmuramoyl-L-alanyl-D-glutamate (UMAG) in the biosynthesis of bacterial cell-wall peptidoglycan. The polypeptide is UDP-N-acetylmuramoyl-L-alanyl-D-glutamate--2,6-diaminopimelate ligase (Listeria monocytogenes serovar 1/2a (strain ATCC BAA-679 / EGD-e)).